Reading from the N-terminus, the 403-residue chain is Chorismate synthase (403 aa).

Arginine 40 and arginine 46 together coordinate NADP(+). Residues 140 to 142, 261 to 262, glycine 305, 320 to 324, and arginine 346 contribute to the FMN site; these read RSS, QA, and KPIST.

It belongs to the chorismate synthase family. As to quaternary structure, homotetramer. The cofactor is FMNH2.

The catalysed reaction is 5-O-(1-carboxyvinyl)-3-phosphoshikimate = chorismate + phosphate. It functions in the pathway metabolic intermediate biosynthesis; chorismate biosynthesis; chorismate from D-erythrose 4-phosphate and phosphoenolpyruvate: step 7/7. Catalyzes the anti-1,4-elimination of the C-3 phosphate and the C-6 proR hydrogen from 5-enolpyruvylshikimate-3-phosphate (EPSP) to yield chorismate, which is the branch point compound that serves as the starting substrate for the three terminal pathways of aromatic amino acid biosynthesis. This reaction introduces a second double bond into the aromatic ring system. This Corynebacterium diphtheriae (strain ATCC 700971 / NCTC 13129 / Biotype gravis) protein is Chorismate synthase.